Consider the following 505-residue polypeptide: Deoxyguanosinetriphosphate triphosphohydrolase (505 aa).

One can recognise an HD domain in the interval 66-273; it reads RLTHSMEVQQ…MEAADDISYC (208 aa).

The protein belongs to the dGTPase family. Type 1 subfamily. In terms of assembly, homotetramer. Mg(2+) serves as cofactor.

It catalyses the reaction dGTP + H2O = 2'-deoxyguanosine + triphosphate + H(+). Functionally, dGTPase preferentially hydrolyzes dGTP over the other canonical NTPs. This chain is Deoxyguanosinetriphosphate triphosphohydrolase, found in Escherichia coli O7:K1 (strain IAI39 / ExPEC).